A 124-amino-acid polypeptide reads, in one-letter code: Ribonuclease P protein component 2 (124 aa).

Belongs to the eukaryotic/archaeal RNase P protein component 2 family. In terms of assembly, consists of a catalytic RNA component and at least 4-5 protein subunits.

The protein resides in the cytoplasm. The catalysed reaction is Endonucleolytic cleavage of RNA, removing 5'-extranucleotides from tRNA precursor.. Its function is as follows. Part of ribonuclease P, a protein complex that generates mature tRNA molecules by cleaving their 5'-ends. The chain is Ribonuclease P protein component 2 from Methanothermobacter thermautotrophicus (strain ATCC 29096 / DSM 1053 / JCM 10044 / NBRC 100330 / Delta H) (Methanobacterium thermoautotrophicum).